Reading from the N-terminus, the 260-residue chain is Thiazole synthase (260 aa).

Lys-96 (schiff-base intermediate with DXP) is an active-site residue. 1-deoxy-D-xylulose 5-phosphate is bound by residues Gly-157, 184-185 (AG), and 206-207 (NT).

The protein belongs to the ThiG family. As to quaternary structure, homotetramer. Forms heterodimers with either ThiH or ThiS.

It localises to the cytoplasm. It carries out the reaction [ThiS sulfur-carrier protein]-C-terminal-Gly-aminoethanethioate + 2-iminoacetate + 1-deoxy-D-xylulose 5-phosphate = [ThiS sulfur-carrier protein]-C-terminal Gly-Gly + 2-[(2R,5Z)-2-carboxy-4-methylthiazol-5(2H)-ylidene]ethyl phosphate + 2 H2O + H(+). Its pathway is cofactor biosynthesis; thiamine diphosphate biosynthesis. Functionally, catalyzes the rearrangement of 1-deoxy-D-xylulose 5-phosphate (DXP) to produce the thiazole phosphate moiety of thiamine. Sulfur is provided by the thiocarboxylate moiety of the carrier protein ThiS. In vitro, sulfur can be provided by H(2)S. This Nitrobacter hamburgensis (strain DSM 10229 / NCIMB 13809 / X14) protein is Thiazole synthase.